Reading from the N-terminus, the 506-residue chain is MGSCCSSQDGDGNGKATAGSTVDSHELSQSVKGKIKQPEPKPKPPPQVPPAQDVKYPIYVGKYDYDSRTDDDLSFKKGDLMYIISTDEGDWWFARSKDTAGKEGYIPSNYVAEYKSLDAEEWFFGQVKRVDAEKQLMMPFNNLGSFLIRDSDTTPGDFSLSVRDIDRVRHYRIKKLENGTYFVTRRLTFQSIQELVAYYTQQADGLCVNLKGPCMVMEKPQTAGLSKQANEEWEIEKKQIKLLRGLGAGQFGEVWEGLWNGTTSVAVKTLKPGTMSIEEFLEEASIMKQLRHPKLIQLYAVCTKEEPIYIVTELMKHGSLLEYLRGDGRSLKLPDLVDMCSQVASGMSYLEQQNYIHRDLAARNILVGEHKICKVADFGLARVIDEEIYEAKLGAKFPIKWTAPEAAMYSRFTIKSDVWSFGIVLYEVITYGRFPYPGMTNAQVLEQIQQSYRMPRPMGCPEKLYAIMMDCWREDPASRPTFETLSWQLEEFFTTGDDAGYKDMER.

2 stretches are compositionally biased toward polar residues: residues 1–10 (MGSCCSSQDG) and 18–31 (AGST…SQSV). The segment at 1–53 (MGSCCSSQDGDGNGKATAGSTVDSHELSQSVKGKIKQPEPKPKPPPQVPPAQD) is disordered. The SH3 domain maps to 54-116 (VKYPIYVGKY…PSNYVAEYKS (63 aa)). The SH2 domain occupies 122 to 214 (WFFGQVKRVD…GLCVNLKGPC (93 aa)). In terms of domain architecture, Protein kinase spans 240 to 493 (IKLLRGLGAG…TLSWQLEEFF (254 aa)). Residues 246–254 (LGAGQFGEV) and lysine 268 each bind ATP. The active-site Proton acceptor is the aspartate 359.

This sequence belongs to the protein kinase superfamily. Tyr protein kinase family.

Its subcellular location is the cytoplasm. The enzyme catalyses L-tyrosyl-[protein] + ATP = O-phospho-L-tyrosyl-[protein] + ADP + H(+). In Spongilla lacustris (Freshwater sponge), this protein is Tyrosine-protein kinase isoform SRK4 (SRK1).